Consider the following 280-residue polypeptide: DegV domain-containing protein Mb2440c (280 aa).

Positions 3–274 (VVVVTDTSCR…AGAVGVCVDV (272 aa)) constitute a DegV domain. Ser-89 serves as a coordination point for hexadecanoate.

In terms of biological role, may bind long-chain fatty acids, such as palmitate, and may play a role in lipid transport or fatty acid metabolism. In Mycobacterium bovis (strain ATCC BAA-935 / AF2122/97), this protein is DegV domain-containing protein Mb2440c.